The chain runs to 122 residues: ATP synthase epsilon chain (122 aa).

Belongs to the ATPase epsilon chain family. As to quaternary structure, F-type ATPases have 2 components, CF(1) - the catalytic core - and CF(0) - the membrane proton channel. CF(1) has five subunits: alpha(3), beta(3), gamma(1), delta(1), epsilon(1). CF(0) has three main subunits: a, b and c.

It localises to the cell membrane. In terms of biological role, produces ATP from ADP in the presence of a proton gradient across the membrane. This Rhodococcus opacus (strain B4) protein is ATP synthase epsilon chain.